Here is a 495-residue protein sequence, read N- to C-terminus: N-succinylglutamate 5-semialdehyde dehydrogenase (495 aa).

Residue 228–233 coordinates NAD(+); that stretch reads GSYATG. Catalysis depends on residues Glu-251 and Cys-285.

The protein belongs to the aldehyde dehydrogenase family. AstD subfamily.

The catalysed reaction is N-succinyl-L-glutamate 5-semialdehyde + NAD(+) + H2O = N-succinyl-L-glutamate + NADH + 2 H(+). It participates in amino-acid degradation; L-arginine degradation via AST pathway; L-glutamate and succinate from L-arginine: step 4/5. In terms of biological role, catalyzes the NAD-dependent reduction of succinylglutamate semialdehyde into succinylglutamate. This is N-succinylglutamate 5-semialdehyde dehydrogenase from Legionella pneumophila (strain Paris).